A 476-amino-acid chain; its full sequence is Ureidoglycolate hydrolase (476 aa).

A signal peptide spans Met-1 to Ala-25. Residues His-138, Asp-149, Glu-184, and His-254 each coordinate Mn(2+). Substrate-binding positions include Glu-183–Glu-184, His-254–Gln-257, His-290, Asn-340, Arg-353, Tyr-423–His-424, and His-448. The segment at Ala-276 to Asp-391 is involved in dimerization. His-448 contacts Mn(2+).

This sequence belongs to the peptidase M20 family. In terms of assembly, homodimer. Requires Mn(2+) as cofactor. Ni(2+) is required as a cofactor. Co(2+) serves as cofactor.

It localises to the endoplasmic reticulum. The enzyme catalyses (S)-ureidoglycolate + H2O + 2 H(+) = glyoxylate + 2 NH4(+) + CO2. It participates in nitrogen metabolism; (S)-allantoin degradation; glyoxylate from (S)-ureidoglycolate: step 1/1. Its function is as follows. Involved in the catabolism of purine nucleotides. Can use (S)-ureidoglycolate as substrate, but not (R)-ureidoglycolate or allantoate. The sequential activity of AAH, UGLYAH and UAH allows a complete purine breakdown without the intermediate generation of urea. The polypeptide is Ureidoglycolate hydrolase (Arabidopsis thaliana (Mouse-ear cress)).